A 571-amino-acid chain; its full sequence is Dihydroxy-acid dehydratase (571 aa).

Residue Cys56 coordinates [2Fe-2S] cluster. Asp88 is a binding site for Mg(2+). Residue Cys129 participates in [2Fe-2S] cluster binding. Mg(2+) is bound by residues Asp130 and Lys131. N6-carboxylysine is present on Lys131. A [2Fe-2S] cluster-binding site is contributed by Cys201. Glu452 contributes to the Mg(2+) binding site. Ser478 functions as the Proton acceptor in the catalytic mechanism.

It belongs to the IlvD/Edd family. Homodimer. [2Fe-2S] cluster is required as a cofactor. It depends on Mg(2+) as a cofactor.

The catalysed reaction is (2R)-2,3-dihydroxy-3-methylbutanoate = 3-methyl-2-oxobutanoate + H2O. It carries out the reaction (2R,3R)-2,3-dihydroxy-3-methylpentanoate = (S)-3-methyl-2-oxopentanoate + H2O. Its pathway is amino-acid biosynthesis; L-isoleucine biosynthesis; L-isoleucine from 2-oxobutanoate: step 3/4. It functions in the pathway amino-acid biosynthesis; L-valine biosynthesis; L-valine from pyruvate: step 3/4. Its function is as follows. Functions in the biosynthesis of branched-chain amino acids. Catalyzes the dehydration of (2R,3R)-2,3-dihydroxy-3-methylpentanoate (2,3-dihydroxy-3-methylvalerate) into 2-oxo-3-methylpentanoate (2-oxo-3-methylvalerate) and of (2R)-2,3-dihydroxy-3-methylbutanoate (2,3-dihydroxyisovalerate) into 2-oxo-3-methylbutanoate (2-oxoisovalerate), the penultimate precursor to L-isoleucine and L-valine, respectively. This Streptococcus suis (strain 98HAH33) protein is Dihydroxy-acid dehydratase.